The primary structure comprises 142 residues: Peptide methionine sulfoxide reductase MsrB (142 aa).

The MsrB domain maps to 2–125 (IKKDKNELNE…NSAAIQFIPY (124 aa)). C114 acts as the Nucleophile in catalysis.

It belongs to the MsrB Met sulfoxide reductase family.

It catalyses the reaction L-methionyl-[protein] + [thioredoxin]-disulfide + H2O = L-methionyl-(R)-S-oxide-[protein] + [thioredoxin]-dithiol. In Staphylococcus haemolyticus (strain JCSC1435), this protein is Peptide methionine sulfoxide reductase MsrB.